Reading from the N-terminus, the 238-residue chain is Large ribosomal subunit protein uL1 (238 aa).

The protein belongs to the universal ribosomal protein uL1 family. In terms of assembly, part of the 50S ribosomal subunit.

Functionally, binds directly to 23S rRNA. The L1 stalk is quite mobile in the ribosome, and is involved in E site tRNA release. In terms of biological role, protein L1 is also a translational repressor protein, it controls the translation of the L11 operon by binding to its mRNA. The sequence is that of Large ribosomal subunit protein uL1 from Frankia alni (strain DSM 45986 / CECT 9034 / ACN14a).